The primary structure comprises 156 residues: Protein FAM162A (156 aa).

Residues 37–57 (TNGFCSKPQESPKPPDQHTYS) are disordered. The required for proapoptotic activity stretch occupies residues 78–104 (RFKKEDEIPETVSFEMLDAAKNKVRVK). The chain crosses the membrane as a helical span at residues 105-122 (ISYVMIALTVAGCVLMVI).

Belongs to the UPF0389 family. As to quaternary structure, interacts with HSP90AB1; HSP90AB1 is essential for FAM162A mitochondrial localization and pro-apoptotic activity. Interacts with VDAC2; the interaction is probably involved in inducing mitochondrial permeability transition.

The protein localises to the mitochondrion membrane. Proposed to be involved in regulation of apoptosis; the exact mechanism may differ between cell types/tissues. May be involved in hypoxia-induced cell death of transformed cells implicating cytochrome C release and caspase activation (such as CASP9) and inducing mitochondrial permeability transition. May be involved in hypoxia-induced cell death of neuronal cells probably by promoting release of AIFM1 from mitochondria to cytoplasm and its translocation to the nucleus; however, the involvement of caspases has been reported conflictingly. The sequence is that of Protein FAM162A (FAM162A) from Bos taurus (Bovine).